Consider the following 692-residue polypeptide: MRACAGSTREAGSGAQDLSTLLCLEESMEEQDEKPPEPPKVCAQDSFLPQEIIIKVEGEDTGSLTIPSQEGVNFKIVTVDFTREEQGTCNPAQRTLDRDVILENHRDLVSWDLATAVGKKDSTSKQRIFDEEPANGVKIERFTRDDPWLSSCEEVDDCKDQLEKQQEKQEILLQEVAFTQRKAVIHERVCKSDETGEKSGLNSSLFSSPVIPIRNHFHKHVSHAKKWHLNAAVNSHQKINENETLYENNECGKPPQSIHLIQFTRTQTKDKSYGFSDRIQSFCHGTPLHIHEKIHGGGKTFDFKECGQVLNPKISHNEQQRIPFEESQYKCSETSHSSSLTQNMRNNSEEKPFECNQCGKSFSWSSHLVAHQRTHTGEKPYECSECGKSFSRSSHLVSHQRTHTGEKPYRCNQCGKSFSQSYVLVVHQRTHTGEKPYECNQCGKSFRQSYKLIAHQRTHTGEKPYECNQCGKSFIQSYKLIAHQRIHTGEKPYECNQCGKSFSQSYKLVAHQRTHTGEKPFECNQCGKSFSWSSQLVAHQRTHTGEKPYECSECGKSFNRSSHLVMHQRIHTGEKPYECNQCGKSFSQSYVLVVHQRTHTGEKPYECSQCGKSFRQSSCLTQHQRTHTGEKPFECNQCGKTFSLSARLIVHQRTHTGEKPFTCIQCGKAFINSYKLIRHQATHTEEKLYECN.

The KRAB domain maps to 72-145 (VNFKIVTVDF…GVKIERFTRD (74 aa)). Glycyl lysine isopeptide (Lys-Gly) (interchain with G-Cter in SUMO2) cross-links involve residues lysine 138, lysine 159, lysine 168, lysine 191, lysine 198, lysine 226, lysine 304, lysine 313, and lysine 330. 12 C2H2-type zinc fingers span residues 353-375 (FECN…QRTH), 381-403 (YECS…QRTH), 409-431 (YRCN…QRTH), 437-459 (YECN…QRTH), 465-487 (YECN…QRIH), 493-515 (YECN…QRTH), 521-543 (FECN…QRTH), 549-571 (YECS…QRIH), 577-599 (YECN…QRTH), 605-627 (YECS…QRTH), 633-655 (FECN…QRTH), and 661-683 (FTCI…QATH).

It belongs to the krueppel C2H2-type zinc-finger protein family.

The protein localises to the nucleus. Its function is as follows. May be involved in transcriptional regulation. The chain is Zinc finger protein 180 (ZNF180) from Homo sapiens (Human).